The primary structure comprises 64 residues: Large ribosomal subunit protein bL28 (64 aa).

It belongs to the bacterial ribosomal protein bL28 family.

The protein is Large ribosomal subunit protein bL28 of Campylobacter lari (strain RM2100 / D67 / ATCC BAA-1060).